The following is a 603-amino-acid chain: Isocitrate dehydrogenase kinase/phosphatase (603 aa).

Residues 327–333 (APGIKGL) and Lys-348 contribute to the ATP site. Residue Asp-383 is part of the active site.

It belongs to the AceK family.

The protein resides in the cytoplasm. It carries out the reaction L-seryl-[isocitrate dehydrogenase] + ATP = O-phospho-L-seryl-[isocitrate dehydrogenase] + ADP + H(+). In terms of biological role, bifunctional enzyme which can phosphorylate or dephosphorylate isocitrate dehydrogenase (IDH) on a specific serine residue. This is a regulatory mechanism which enables bacteria to bypass the Krebs cycle via the glyoxylate shunt in response to the source of carbon. When bacteria are grown on glucose, IDH is fully active and unphosphorylated, but when grown on acetate or ethanol, the activity of IDH declines drastically concomitant with its phosphorylation. This is Isocitrate dehydrogenase kinase/phosphatase from Burkholderia mallei (strain ATCC 23344).